Consider the following 462-residue polypeptide: Glycine--tRNA ligase (462 aa).

Positions 98 and 174 each coordinate substrate. Residues 206-208, 216-221, 290-291, and 334-337 each bind ATP; these read RNE, FRTREF, EL, and GADR. 221-225 lines the substrate pocket; it reads FEQME. 330 to 334 is a substrate binding site; sequence EPSLG.

It belongs to the class-II aminoacyl-tRNA synthetase family. As to quaternary structure, homodimer.

The protein localises to the cytoplasm. The catalysed reaction is tRNA(Gly) + glycine + ATP = glycyl-tRNA(Gly) + AMP + diphosphate. Its function is as follows. Catalyzes the attachment of glycine to tRNA(Gly). This chain is Glycine--tRNA ligase, found in Lachnoclostridium phytofermentans (strain ATCC 700394 / DSM 18823 / ISDg) (Clostridium phytofermentans).